Here is a 305-residue protein sequence, read N- to C-terminus: MIKQRTLKQSIKVTGVGLHSGNKVTLKLRPAPINTGIVYCRTDLTPPVYFPADATAVRDTMLCTALVNDQGVRISTVEHLNSALAGLGLDNVIIEVDAPEVPIMDGSASPFVYLLLDAGIEEQDAAKKFIRVKQKIRVEDGDKWAEISPYNGFRLNFTIDFNHPAISKNLSNYTLEFSAQKFVQQISRARTFAFMKDIEYLQSQGLALGGSLDNAIVLDNYRVLNEDGLRFKDELVRHKMLDAIGDLFMAGYNILGDFKAYKSGHGLNNKLLRALLANQEAWEFVTFEDKEKVPQGYAIPSQVLI.

H79, H238, and D242 together coordinate Zn(2+). H265 serves as the catalytic Proton donor.

This sequence belongs to the LpxC family. Requires Zn(2+) as cofactor.

It catalyses the reaction a UDP-3-O-[(3R)-3-hydroxyacyl]-N-acetyl-alpha-D-glucosamine + H2O = a UDP-3-O-[(3R)-3-hydroxyacyl]-alpha-D-glucosamine + acetate. The protein operates within glycolipid biosynthesis; lipid IV(A) biosynthesis; lipid IV(A) from (3R)-3-hydroxytetradecanoyl-[acyl-carrier-protein] and UDP-N-acetyl-alpha-D-glucosamine: step 2/6. In terms of biological role, catalyzes the hydrolysis of UDP-3-O-myristoyl-N-acetylglucosamine to form UDP-3-O-myristoylglucosamine and acetate, the committed step in lipid A biosynthesis. The polypeptide is UDP-3-O-acyl-N-acetylglucosamine deacetylase (Mannheimia succiniciproducens (strain KCTC 0769BP / MBEL55E)).